Consider the following 449-residue polypeptide: Naphthalene 1,2-dioxygenase system, large oxygenase component (449 aa).

The 99-residue stretch at 39-137 (WLFLTHDSLI…LNKKCLGLKE (99 aa)) folds into the Rieske domain. Residues cysteine 81, histidine 83, cysteine 101, and histidine 104 each contribute to the [2Fe-2S] cluster site. The Fe cation site is built by histidine 208, histidine 213, and aspartate 362.

This sequence belongs to the bacterial ring-hydroxylating dioxygenase alpha subunit family. In terms of assembly, the naphthalene dioxygenase (NDO) multicomponent enzyme system is composed of an electron transfer component and a dioxygenase component (iron sulfur protein (ISP)). The electron transfer component is composed of a ferredoxin reductase (NdoR) and a ferredoxin (NdoA), and the dioxygenase component is formed of a heterohexamer (trimer of heterodimers) of three large alpha subunits (NdoB) and three small beta subunits (NdoC). [2Fe-2S] cluster serves as cofactor. It depends on Fe(2+) as a cofactor.

The catalysed reaction is naphthalene + NADH + O2 + H(+) = (1R,2S)-1,2-dihydronaphthalene-1,2-diol + NAD(+). It functions in the pathway aromatic compound metabolism; naphthalene degradation. Functionally, component of the naphthalene dioxygenase (NDO) multicomponent enzyme system which catalyzes the incorporation of both atoms of molecular oxygen into naphthalene to form cis-(1R,2S)-dihydroxy-1,2-dihydronaphthalene. The alpha subunit has a catalytic role in the holoenzyme. Also able to catalyze the cis-dihydroxylation of biphenyl and phenanthrene. The polypeptide is Naphthalene 1,2-dioxygenase system, large oxygenase component (Pseudomonas putida (Arthrobacter siderocapsulatus)).